The primary structure comprises 213 residues: N-(5'-phosphoribosyl)anthranilate isomerase (213 aa).

The protein belongs to the TrpF family.

The enzyme catalyses N-(5-phospho-beta-D-ribosyl)anthranilate = 1-(2-carboxyphenylamino)-1-deoxy-D-ribulose 5-phosphate. The protein operates within amino-acid biosynthesis; L-tryptophan biosynthesis; L-tryptophan from chorismate: step 3/5. The protein is N-(5'-phosphoribosyl)anthranilate isomerase of Roseiflexus sp. (strain RS-1).